The primary structure comprises 361 residues: tRNA-specific 2-thiouridylase MnmA (361 aa).

Residues 6 to 13 and I32 contribute to the ATP site; that span reads LVSGGVDS. The segment at 93–95 is interaction with target base in tRNA; it reads NPD. C98 functions as the Nucleophile in the catalytic mechanism. A disulfide bridge connects residues C98 and C193. G121 serves as a coordination point for ATP. An interaction with tRNA region spans residues 143–145; that stretch reads KDQ. C193 functions as the Cysteine persulfide intermediate in the catalytic mechanism.

It belongs to the MnmA/TRMU family.

Its subcellular location is the cytoplasm. The catalysed reaction is S-sulfanyl-L-cysteinyl-[protein] + uridine(34) in tRNA + AH2 + ATP = 2-thiouridine(34) in tRNA + L-cysteinyl-[protein] + A + AMP + diphosphate + H(+). In terms of biological role, catalyzes the 2-thiolation of uridine at the wobble position (U34) of tRNA, leading to the formation of s(2)U34. The protein is tRNA-specific 2-thiouridylase MnmA of Porphyromonas gingivalis (strain ATCC 33277 / DSM 20709 / CIP 103683 / JCM 12257 / NCTC 11834 / 2561).